A 935-amino-acid polypeptide reads, in one-letter code: Isoleucine--tRNA ligase (935 aa).

The 'HIGH' region signature appears at 58 to 68; sequence PYANGSIHVGH. An L-isoleucyl-5'-AMP-binding site is contributed by glutamate 558. The 'KMSKS' region motif lies at 599–603; the sequence is KMSKS. Residue lysine 602 coordinates ATP. Residues cysteine 897, cysteine 900, cysteine 917, and cysteine 920 each contribute to the Zn(2+) site.

The protein belongs to the class-I aminoacyl-tRNA synthetase family. IleS type 1 subfamily. As to quaternary structure, monomer. Zn(2+) is required as a cofactor.

The protein resides in the cytoplasm. It catalyses the reaction tRNA(Ile) + L-isoleucine + ATP = L-isoleucyl-tRNA(Ile) + AMP + diphosphate. Its function is as follows. Catalyzes the attachment of isoleucine to tRNA(Ile). As IleRS can inadvertently accommodate and process structurally similar amino acids such as valine, to avoid such errors it has two additional distinct tRNA(Ile)-dependent editing activities. One activity is designated as 'pretransfer' editing and involves the hydrolysis of activated Val-AMP. The other activity is designated 'posttransfer' editing and involves deacylation of mischarged Val-tRNA(Ile). The protein is Isoleucine--tRNA ligase of Francisella tularensis subsp. novicida (strain U112).